The sequence spans 375 residues: tRNA-specific 2-thiouridylase MnmA (375 aa).

ATP-binding positions include 8–15 (GLSGGVDS) and Met-34. An interaction with target base in tRNA region spans residues 104 to 106 (NPD). Residue Cys-109 is the Nucleophile of the active site. Cysteines 109 and 205 form a disulfide. Gly-133 contributes to the ATP binding site. Residues 155–157 (KDQ) form an interaction with tRNA region. Cys-205 (cysteine persulfide intermediate) is an active-site residue. The segment at 313-314 (RY) is interaction with tRNA.

The protein belongs to the MnmA/TRMU family.

It localises to the cytoplasm. It carries out the reaction S-sulfanyl-L-cysteinyl-[protein] + uridine(34) in tRNA + AH2 + ATP = 2-thiouridine(34) in tRNA + L-cysteinyl-[protein] + A + AMP + diphosphate + H(+). Catalyzes the 2-thiolation of uridine at the wobble position (U34) of tRNA, leading to the formation of s(2)U34. This is tRNA-specific 2-thiouridylase MnmA from Acholeplasma laidlawii (strain PG-8A).